A 34-amino-acid chain; its full sequence is MENNNRFMPHIRRTTHIMMFAHRNSFDFHFFNAR.

Positions 10–16 (HIRRTTH) match the Ornithine recognition loop motif. An L-ornithine-binding site is contributed by Arg-13.

This sequence belongs to the speF operon leader peptide family. In terms of assembly, binds ornithine in stalled 70S ribosomes, blocking the upper two-thirds of the exit tunnel. Contacts 23S rRNA and ribosomal proteins L4 and L22.

In terms of biological role, a small protein (arrest peptide) encoded upstream of inducible ornithine carboxylase gene (speF) that controls expression of downstream genes (speF and potE) by transcriptional and translational attenuation. Its expression controls transcription and translation of downstream SpeF; translation pausing at low Arg levels on this mRNA prevents premature Rho-dependent transcription termination of speF and also enhances SprF translation by preventing sequestration of its ribosome-binding site. In the presence of high Arg levels translation of this protein allows the formation of an speF mRNA structure that is degraded by RNase G. The polypeptide is Leader peptide SpeFL (Salmonella typhimurium (strain SL1344)).